The sequence spans 194 residues: Probable GTP-binding protein EngB (194 aa).

One can recognise an EngB-type G domain in the interval 22–194; it reads KIPQIAIVGK…LRIFEEVIEK (173 aa). GTP contacts are provided by residues 30–37, 57–61, 75–78, 142–145, and 173–175; these read GKSNVGKS, GKTRG, DLPG, TKAD, and FSA. Mg(2+) is bound by residues S37 and T59.

Belongs to the TRAFAC class TrmE-Era-EngA-EngB-Septin-like GTPase superfamily. EngB GTPase family. It depends on Mg(2+) as a cofactor.

Its function is as follows. Necessary for normal cell division and for the maintenance of normal septation. The chain is Probable GTP-binding protein EngB from Caldanaerobacter subterraneus subsp. tengcongensis (strain DSM 15242 / JCM 11007 / NBRC 100824 / MB4) (Thermoanaerobacter tengcongensis).